We begin with the raw amino-acid sequence, 506 residues long: Cobyric acid synthase (506 aa).

Residues 251-448 (DITIAIVQLP…LHGLFDSDAF (198 aa)) form the GATase cobBQ-type domain. Cysteine 332 serves as the catalytic Nucleophile. Histidine 440 is a catalytic residue.

Belongs to the CobB/CobQ family. CobQ subfamily.

The protein operates within cofactor biosynthesis; adenosylcobalamin biosynthesis. Its function is as follows. Catalyzes amidations at positions B, D, E, and G on adenosylcobyrinic A,C-diamide. NH(2) groups are provided by glutamine, and one molecule of ATP is hydrogenolyzed for each amidation. This is Cobyric acid synthase from Salmonella arizonae (strain ATCC BAA-731 / CDC346-86 / RSK2980).